The sequence spans 349 residues: uncharacterized protein (349 aa).

Positions 1-26 (MQSHAGGSRAPLGLLLICLCLPGLFA) are cleaved as a signal peptide. 2 disordered regions span residues 30-113 (GAPE…QGMA) and 322-349 (YPAG…GITP). The span at 39-52 (HSGQPSFTSLLNPG) shows a compositional bias: polar residues. Residues 90-101 (NGPPFWGPPPME) show a composition bias toward pro residues.

As to quaternary structure, binds to numerous extracellular matrix proteins.

Its subcellular location is the secreted. The protein resides in the extracellular space. The protein localises to the extracellular matrix. This is an uncharacterized protein from Mus musculus (Mouse).